Here is a 396-residue protein sequence, read N- to C-terminus: Elongation factor Tu (396 aa).

A tr-type G domain is found at Lys10–Glu206. The tract at residues Gly19–Thr26 is G1. Gly19–Thr26 serves as a coordination point for GTP. Position 26 (Thr26) interacts with Mg(2+). Positions Gly60 to Ser64 are G2. Positions Asp81–Gly84 are G3. Residues Asp81–His85 and Asn136–Asp139 contribute to the GTP site. The segment at Asn136–Asp139 is G4. A G5 region spans residues Ser174–Leu176.

Belongs to the TRAFAC class translation factor GTPase superfamily. Classic translation factor GTPase family. EF-Tu/EF-1A subfamily. Monomer.

The protein resides in the cytoplasm. The catalysed reaction is GTP + H2O = GDP + phosphate + H(+). In terms of biological role, GTP hydrolase that promotes the GTP-dependent binding of aminoacyl-tRNA to the A-site of ribosomes during protein biosynthesis. This is Elongation factor Tu from Rhodopseudomonas palustris (strain ATCC BAA-98 / CGA009).